Reading from the N-terminus, the 126-residue chain is Acyl carrier protein 2, mitochondrial (126 aa).

The transit peptide at 1–36 (MAARGAMLRYLRVNVNPTIQNPRECVLPFSILLRRF) directs the protein to the mitochondrion. The Carrier domain occupies 48–123 (SEVTDRVLSV…LAVDFIASHP (76 aa)). Serine 83 carries the post-translational modification O-(pantetheine 4'-phosphoryl)serine.

It belongs to the acyl carrier protein (ACP) family. Complex I is composed of at least 49 different subunits. 4'-phosphopantetheine is transferred from CoA to a specific serine of the apo-ACP-like protein.

It is found in the mitochondrion. Its pathway is lipid metabolism; fatty acid biosynthesis. Carrier of the growing fatty acid chain in fatty acid biosynthesis. May be involved in the synthesis of short and medium chain fatty acids. Accessory and non-catalytic subunit of the mitochondrial membrane respiratory chain NADH dehydrogenase (Complex I), which functions in the transfer of electrons from NADH to the respiratory chain. The protein is Acyl carrier protein 2, mitochondrial (MTACP2) of Arabidopsis thaliana (Mouse-ear cress).